Reading from the N-terminus, the 194-residue chain is E3 ubiquitin-protein ligase RNF185 (194 aa).

Positions 1–27 (MASAAASESSSSSSSSSAGAANGQSAG) are enriched in low complexity. Residues 1–32 (MASAAASESSSSSSSSSAGAANGQSAGESGGG) are disordered. A required for ubiquitin ligase activity and protection against ER stress-induced cell death region spans residues 31–82 (GGGAQDSTFECNICLDTSKDAVISLCGHLFCWPCLHQWLETRPNRQVCPVCK). The RING-type zinc finger occupies 41–82 (CNICLDTSKDAVISLCGHLFCWPCLHQWLETRPNRQVCPVCK). A disordered region spans residues 92 to 126 (PLYGRGSTGQQDPREKTPPRPQGQRPEPENRGGFQ). A run of 2 helical transmembrane segments spans residues 133 to 153 (GGFQ…ATAF) and 174 to 194 (QFLS…LLIA).

The protein localises to the mitochondrion outer membrane. It is found in the endoplasmic reticulum membrane. The enzyme catalyses S-ubiquitinyl-[E2 ubiquitin-conjugating enzyme]-L-cysteine + [acceptor protein]-L-lysine = [E2 ubiquitin-conjugating enzyme]-L-cysteine + N(6)-ubiquitinyl-[acceptor protein]-L-lysine.. It functions in the pathway protein modification; protein ubiquitination. Its function is as follows. E3 ubiquitin-protein ligase that regulates selective mitochondrial autophagy by mediating 'Lys-63'-linked polyubiquitination. Acts in the endoplasmic reticulum (ER)-associated degradation (ERAD) pathway, which targets misfolded proteins that accumulate in the endoplasmic reticulum (ER) for ubiquitination and subsequent proteasome-mediated degradation. Protects cells from ER stress-induced apoptosis. Responsible for the cotranslational ubiquitination and degradation of CFTR in the ERAD pathway. Also acts as a regulator of the innate antiviral response by catalyzing 'Lys-27'-linked polyubiquitination of CGAS, thereby promoting CGAS cyclic GMP-AMP synthase activity. Preferentially associates with the E2 enzymes UBE2J1 and UBE2J2. This Danio rerio (Zebrafish) protein is E3 ubiquitin-protein ligase RNF185 (rnf185).